The primary structure comprises 74 residues: Protein RALF-like 25 (74 aa).

Residues 1 to 22 form the signal peptide; sequence MKTFMIILLVICSILIVGRVEA. 2 disulfides stabilise this stretch: cysteine 35–cysteine 44 and cysteine 62–cysteine 68.

This sequence belongs to the plant rapid alkalinization factor (RALF) family.

Its subcellular location is the secreted. Its function is as follows. Cell signaling peptide that may regulate plant stress, growth, and development. Mediates a rapid alkalinization of extracellular space by mediating a transient increase in the cytoplasmic Ca(2+) concentration leading to a calcium-dependent signaling events through a cell surface receptor and a concomitant activation of some intracellular mitogen-activated protein kinases. This Arabidopsis thaliana (Mouse-ear cress) protein is Protein RALF-like 25 (RALFL25).